Here is a 171-residue protein sequence, read N- to C-terminus: Shikimate kinase (171 aa).

Residue 14–19 participates in ATP binding; it reads GAGKST. S18 contacts Mg(2+). 3 residues coordinate substrate: D36, R60, and G82. ATP is bound at residue R120. Substrate is bound at residue R139. Q156 provides a ligand contact to ATP.

It belongs to the shikimate kinase family. As to quaternary structure, monomer. It depends on Mg(2+) as a cofactor.

Its subcellular location is the cytoplasm. The catalysed reaction is shikimate + ATP = 3-phosphoshikimate + ADP + H(+). It participates in metabolic intermediate biosynthesis; chorismate biosynthesis; chorismate from D-erythrose 4-phosphate and phosphoenolpyruvate: step 5/7. In terms of biological role, catalyzes the specific phosphorylation of the 3-hydroxyl group of shikimic acid using ATP as a cosubstrate. The protein is Shikimate kinase of Shewanella putrefaciens (strain CN-32 / ATCC BAA-453).